A 145-amino-acid chain; its full sequence is Phospholipase A2 phospholipin (145 aa).

An N-terminal signal peptide occupies residues 1–15 (MVDLARRCSGSTEGR). Ca(2+)-binding residues include Trp24, Gly26, and Gly28. 5 disulfide bridges follow: Cys25-Cys46, Cys45-Cys84, Cys52-Cys77, Cys75-Cys116, and Cys121-Cys132. His49 is an active-site residue. Ca(2+) is bound at residue Asp50. Residues 124-128 (KRSGR) constitute a propeptide that is removed on maturation.

This sequence belongs to the phospholipase A2 family. Group III subfamily. As to quaternary structure, heterodimer composed of a small subunit and a large subunit; disulfid-linked. Requires Ca(2+) as cofactor. In terms of tissue distribution, expressed by the venom gland.

It localises to the secreted. The catalysed reaction is a 1,2-diacyl-sn-glycero-3-phosphocholine + H2O = a 1-acyl-sn-glycero-3-phosphocholine + a fatty acid + H(+). Scorpion venom phospholipase A2 (PLA2) that contains enzymatic activity, but does not inhibit ryanodine receptors in contrary to imperatoxin-1, another heterodimer of P.imperator venom. PLA2 catalyzes the calcium-dependent hydrolysis of the 2-acyl groups in 3-sn-phosphoglycerides. In Pandinus imperator (Emperor scorpion), this protein is Phospholipase A2 phospholipin.